The following is a 256-amino-acid chain: NAD(P)H-hydrate epimerase (256 aa).

The span at Met1–Thr18 shows a compositional bias: basic and acidic residues. The disordered stretch occupies residues Met1–Val21. The YjeF N-terminal domain occupies Ala23–Arg229. Residue Asp74 to Asp78 participates in (6S)-NADPHX binding. K(+) contacts are provided by Asn75 and Asp135. (6S)-NADPHX-binding positions include Gly139–Arg147 and Asp172. Residue Ser175 participates in K(+) binding.

This sequence belongs to the NnrE/AIBP family. K(+) is required as a cofactor.

It carries out the reaction (6R)-NADHX = (6S)-NADHX. The catalysed reaction is (6R)-NADPHX = (6S)-NADPHX. Catalyzes the epimerization of the S- and R-forms of NAD(P)HX, a damaged form of NAD(P)H that is a result of enzymatic or heat-dependent hydration. This is a prerequisite for the S-specific NAD(P)H-hydrate dehydratase to allow the repair of both epimers of NAD(P)HX. This chain is NAD(P)H-hydrate epimerase, found in Microbacterium testaceum (strain StLB037).